A 273-amino-acid polypeptide reads, in one-letter code: MHDANIRVAIAGAGGRMGRQLIQAALALEGVQLGAALEREGSSLLGSDAGELAGAGKTGVTVQSSLDAVKDDFDVFIDFTRPEGTLNHLAFCRQHGKGMVIGTTGFDEAGKQAIRDAAADIAIVFAANFSVGVNVMLKLLEKAAKVMGDYTDIEIIEAHHRHKVDAPSGTALAMGEAIAHALDKDLKDCAVYSRESHTGERVPGTIGFATVRAGDIVGEHTAMFADIGERLEITHKASSRMTFANGAVRSALWLSGKESGLFDMRDVLDLNSL.

NAD(+) is bound by residues 12–17 and Glu-38; that span reads GAGGRM. NADP(+) is bound at residue Arg-39. Residues 102–104 and 126–129 each bind NAD(+); these read GTT and AANF. Catalysis depends on His-159, which acts as the Proton donor/acceptor. Residue His-160 participates in (S)-2,3,4,5-tetrahydrodipicolinate binding. Lys-163 (proton donor) is an active-site residue. 169–170 serves as a coordination point for (S)-2,3,4,5-tetrahydrodipicolinate; it reads GT.

Belongs to the DapB family. As to quaternary structure, homotetramer.

The protein resides in the cytoplasm. The enzyme catalyses (S)-2,3,4,5-tetrahydrodipicolinate + NAD(+) + H2O = (2S,4S)-4-hydroxy-2,3,4,5-tetrahydrodipicolinate + NADH + H(+). It carries out the reaction (S)-2,3,4,5-tetrahydrodipicolinate + NADP(+) + H2O = (2S,4S)-4-hydroxy-2,3,4,5-tetrahydrodipicolinate + NADPH + H(+). The protein operates within amino-acid biosynthesis; L-lysine biosynthesis via DAP pathway; (S)-tetrahydrodipicolinate from L-aspartate: step 4/4. In terms of biological role, catalyzes the conversion of 4-hydroxy-tetrahydrodipicolinate (HTPA) to tetrahydrodipicolinate. The chain is 4-hydroxy-tetrahydrodipicolinate reductase from Shigella boydii serotype 4 (strain Sb227).